A 265-amino-acid polypeptide reads, in one-letter code: Phosphate import ATP-binding protein PstB (265 aa).

Residues 11–260 (VSADEVKIAA…PRDPRTESYI (250 aa)) enclose the ABC transporter domain. 50–57 (GPSGCGKS) is a binding site for ATP.

Belongs to the ABC transporter superfamily. Phosphate importer (TC 3.A.1.7) family. As to quaternary structure, the complex is composed of two ATP-binding proteins (PstB), two transmembrane proteins (PstC and PstA) and a solute-binding protein (PstS).

The protein resides in the cell inner membrane. The catalysed reaction is phosphate(out) + ATP + H2O = ADP + 2 phosphate(in) + H(+). Its function is as follows. Part of the ABC transporter complex PstSACB involved in phosphate import. Responsible for energy coupling to the transport system. This Cereibacter sphaeroides (strain ATCC 17023 / DSM 158 / JCM 6121 / CCUG 31486 / LMG 2827 / NBRC 12203 / NCIMB 8253 / ATH 2.4.1.) (Rhodobacter sphaeroides) protein is Phosphate import ATP-binding protein PstB.